Consider the following 335-residue polypeptide: Biotin synthase (335 aa).

A Radical SAM core domain is found at 51 to 278; the sequence is NTVQLSSLLS…LAKVRLSAGR (228 aa). [4Fe-4S] cluster contacts are provided by C66, C70, and C73. Residues C110, C141, C201, and R273 each coordinate [2Fe-2S] cluster.

This sequence belongs to the radical SAM superfamily. Biotin synthase family. Homodimer. It depends on [4Fe-4S] cluster as a cofactor. [2Fe-2S] cluster is required as a cofactor.

It catalyses the reaction (4R,5S)-dethiobiotin + (sulfur carrier)-SH + 2 reduced [2Fe-2S]-[ferredoxin] + 2 S-adenosyl-L-methionine = (sulfur carrier)-H + biotin + 2 5'-deoxyadenosine + 2 L-methionine + 2 oxidized [2Fe-2S]-[ferredoxin]. The protein operates within cofactor biosynthesis; biotin biosynthesis; biotin from 7,8-diaminononanoate: step 2/2. Its function is as follows. Catalyzes the conversion of dethiobiotin (DTB) to biotin by the insertion of a sulfur atom into dethiobiotin via a radical-based mechanism. This Bordetella bronchiseptica (strain ATCC BAA-588 / NCTC 13252 / RB50) (Alcaligenes bronchisepticus) protein is Biotin synthase.